The chain runs to 401 residues: Phosphoglycerate kinase (401 aa).

Residues 24–26 (DFN), Arg40, 63–66 (HFGR), Arg122, and Arg155 contribute to the substrate site. ATP is bound by residues Lys206, Gly297, Glu328, and 357 to 360 (GGDS).

Belongs to the phosphoglycerate kinase family. As to quaternary structure, monomer.

Its subcellular location is the cytoplasm. It carries out the reaction (2R)-3-phosphoglycerate + ATP = (2R)-3-phospho-glyceroyl phosphate + ADP. It functions in the pathway carbohydrate degradation; glycolysis; pyruvate from D-glyceraldehyde 3-phosphate: step 2/5. The polypeptide is Phosphoglycerate kinase (Gloeothece citriformis (strain PCC 7424) (Cyanothece sp. (strain PCC 7424))).